Reading from the N-terminus, the 522-residue chain is Ribonuclease Y (522 aa).

Residues 7–27 (STILYCLFFFFLGIAAVLAFI) form a helical membrane-spanning segment. Residues 212–272 (TTSTVGVPTD…VRREVARMSL (61 aa)) enclose the KH domain. The HD domain maps to 338–431 (VLRHSVEVAF…VATADACSAS (94 aa)).

It belongs to the RNase Y family.

Its subcellular location is the cell membrane. Its function is as follows. Endoribonuclease that initiates mRNA decay. This Rhodopirellula baltica (strain DSM 10527 / NCIMB 13988 / SH1) protein is Ribonuclease Y.